The chain runs to 37 residues: MKVRASVKPICEKCRVIRRKGRVMVICENPKHKQRQG.

It belongs to the bacterial ribosomal protein bL36 family.

This chain is Large ribosomal subunit protein bL36, found in Gloeobacter violaceus (strain ATCC 29082 / PCC 7421).